Consider the following 371-residue polypeptide: Large ribosomal subunit protein bL27m (371 aa).

Residues 1–27 (MWNPILLDTSSFSFQKHVSGVFLQVRN) constitute a mitochondrion transit peptide.

The protein belongs to the bacterial ribosomal protein bL27 family. In terms of assembly, component of the mitochondrial large ribosomal subunit (mt-LSU). Mature yeast 74S mitochondrial ribosomes consist of a small (37S) and a large (54S) subunit. The 37S small subunit contains a 15S ribosomal RNA (15S mt-rRNA) and 34 different proteins. The 54S large subunit contains a 21S rRNA (21S mt-rRNA) and 46 different proteins.

It is found in the mitochondrion. Functionally, component of the mitochondrial ribosome (mitoribosome), a dedicated translation machinery responsible for the synthesis of mitochondrial genome-encoded proteins, including at least some of the essential transmembrane subunits of the mitochondrial respiratory chain. The mitoribosomes are attached to the mitochondrial inner membrane and translation products are cotranslationally integrated into the membrane. The protein is Large ribosomal subunit protein bL27m (MRP7) of Saccharomyces cerevisiae (strain ATCC 204508 / S288c) (Baker's yeast).